Here is a 645-residue protein sequence, read N- to C-terminus: Threonine--tRNA ligase (645 aa).

Residues 1–63 (MEQINIQFPD…ETDGSIGIVT (63 aa)) enclose the TGS domain. The interval 242–540 (DHRKIGKELE…LTEETKGAFP (299 aa)) is catalytic. C336, H387, and H517 together coordinate Zn(2+).

Belongs to the class-II aminoacyl-tRNA synthetase family. As to quaternary structure, homodimer. It depends on Zn(2+) as a cofactor.

It localises to the cytoplasm. It carries out the reaction tRNA(Thr) + L-threonine + ATP = L-threonyl-tRNA(Thr) + AMP + diphosphate + H(+). In terms of biological role, catalyzes the attachment of threonine to tRNA(Thr) in a two-step reaction: L-threonine is first activated by ATP to form Thr-AMP and then transferred to the acceptor end of tRNA(Thr). Also edits incorrectly charged L-seryl-tRNA(Thr). This chain is Threonine--tRNA ligase, found in Staphylococcus aureus (strain Mu3 / ATCC 700698).